We begin with the raw amino-acid sequence, 803 residues long: Volume-regulated anion channel subunit LRRC8C (803 aa).

Residues 1–22 (MIPVTEFRQFSEQQPAFRVLKP) are Cytoplasmic-facing. The helical transmembrane segment at 23–43 (WWDVFTDYLSVAMLMIGVFGC) threads the bilayer. The Extracellular portion of the chain corresponds to 44–125 (TLQVMQDKII…YERALHWYAK (82 aa)). Intrachain disulfides connect Cys54–Cys308 and Cys115–Cys293. N-linked (GlcNAc...) asparagine glycans are attached at residues Asn64 and Asn70. A helical transmembrane segment spans residues 126–146 (YFPYLVLIHTLVFMLCSNFWF). Residues 147-266 (KFPGSSSKIE…ILYAMYVRQT (120 aa)) lie on the Cytoplasmic side of the membrane. Residues 177 to 211 (EVSGEDSEEKDNRKNNMNRSNTIQSGPEGSLVKSQ) are disordered. Positions 191–211 (NNMNRSNTIQSGPEGSLVKSQ) are enriched in polar residues. Residues Ser212 and Ser215 each carry the phosphoserine modification. Residues 267-287 (VLKVIKFLIIIAYNSALVSKV) traverse the membrane as a helical segment. Over 288–320 (QFTVDCNVDIQDMTGYKNFSCNHTMAHLFSKLS) the chain is Extracellular. The helical transmembrane segment at 321 to 341 (FCYLCFVSIYGLTCLYTLYWL) threads the bilayer. Residues 342-803 (FYRSLREYSF…SDVREQMKAD (462 aa)) lie on the Cytoplasmic side of the membrane. LRR repeat units follow at residues 397–420 (ENKLKQLNLNNEWTPDKLRQKLQT), 421–443 (NAHNRLELPLIMLSGLPDTVFEI), 446–466 (LQSLKLEIIKNVMIPATIAQL), 467–488 (DNLQELSLHQCSVKIHSAALSF), 490–513 (KENLKVLSVKFDDMRELPPWMYGL), 515–537 (NLEELYLVGSLSHDISKNVTLES), 541–563 (LKSLKILSIKSNVSKIPQAVVDV), 565–587 (SHLQKMCIHNDGTKLVMLNNLKK), 588–611 (MTNLTELELVHCDLERIPHAVFSL), 613–635 (SLQELDLKENNLKSIEEIVSFQH), 637–659 (RKLTVLKLWYNSIAYIPEHIKKL), 660–682 (TSLERLFFSHNKVEVLPSHLFLC), 684–705 (KIRYLDLSYNDIRFIPPEIGVL), 706–728 (QSLQYFSITCNKVESLPDELYFC), 730–751 (KLKTLKIGKNSLSVLSPKIGNL), 752–774 (LFLSYLDIKGNHFEVLPPELGDC), and 776–799 (ALKRAGLVVEDALFETLPSDVREQ).

This sequence belongs to the LRRC8 family. In terms of assembly, heterohexamer; oligomerizes with other LRRC8 proteins (LRRC8A, LRRC8B, LRRC8D and/or LRRC8E) to form a heterohexamer. Homoheptamer; inactive, likely because it is not targeted to the plasma membrane in the absence of LRRC8A. In vivo, the subunit composition may depend primarily on expression levels, and heterooligomeric channels containing various proportions of the different LRRC8 proteins may coexist.

It is found in the cell membrane. The protein resides in the endoplasmic reticulum membrane. The enzyme catalyses chloride(in) = chloride(out). The catalysed reaction is iodide(out) = iodide(in). It carries out the reaction taurine(out) = taurine(in). It catalyses the reaction 2',3'-cGAMP(out) = 2',3'-cGAMP(in). Non-essential component of the volume-regulated anion channel (VRAC, also named VSOAC channel), an anion channel required to maintain a constant cell volume in response to extracellular or intracellular osmotic changes. The VRAC channel conducts iodide better than chloride and can also conduct organic osmolytes like taurine. Plays a redundant role in the efflux of amino acids, such as aspartate and glutamate, in response to osmotic stress. The VRAC channel also mediates transport of immunoreactive cyclic dinucleotide GMP-AMP (2'-3'-cGAMP), an immune messenger produced in response to DNA virus in the cytosol. Channel activity requires LRRC8A plus at least one other family member (LRRC8B, LRRC8C, LRRC8D or LRRC8E); channel characteristics depend on the precise subunit composition. The polypeptide is Volume-regulated anion channel subunit LRRC8C (Rattus norvegicus (Rat)).